The sequence spans 476 residues: Bifunctional protein HldE (476 aa).

Positions 1–318 (MKVTLPDFRR…ENAIRGRAET (318 aa)) are ribokinase. ATP is bound at residue 195–198 (NLSE). Asp-264 is an active-site residue. Positions 344 to 476 (MTNGIFDILH…IIQSIKNGRG (133 aa)) are cytidylyltransferase.

The protein in the N-terminal section; belongs to the carbohydrate kinase PfkB family. It in the C-terminal section; belongs to the cytidylyltransferase family. In terms of assembly, homodimer.

It catalyses the reaction D-glycero-beta-D-manno-heptose 7-phosphate + ATP = D-glycero-beta-D-manno-heptose 1,7-bisphosphate + ADP + H(+). It carries out the reaction D-glycero-beta-D-manno-heptose 1-phosphate + ATP + H(+) = ADP-D-glycero-beta-D-manno-heptose + diphosphate. Its pathway is nucleotide-sugar biosynthesis; ADP-L-glycero-beta-D-manno-heptose biosynthesis; ADP-L-glycero-beta-D-manno-heptose from D-glycero-beta-D-manno-heptose 7-phosphate: step 1/4. It participates in nucleotide-sugar biosynthesis; ADP-L-glycero-beta-D-manno-heptose biosynthesis; ADP-L-glycero-beta-D-manno-heptose from D-glycero-beta-D-manno-heptose 7-phosphate: step 3/4. Its function is as follows. Catalyzes the phosphorylation of D-glycero-D-manno-heptose 7-phosphate at the C-1 position to selectively form D-glycero-beta-D-manno-heptose-1,7-bisphosphate. Functionally, catalyzes the ADP transfer from ATP to D-glycero-beta-D-manno-heptose 1-phosphate, yielding ADP-D-glycero-beta-D-manno-heptose. The protein is Bifunctional protein HldE of Yersinia pestis bv. Antiqua (strain Antiqua).